Reading from the N-terminus, the 361-residue chain is Transposase A from transposon Tn554 (361 aa).

A Core-binding (CB) domain is found at 23-120 (YQLIEPVMKF…VVMSFLDYLS (98 aa)). The 189-residue stretch at 163–351 (KQIRTLRSKE…SDQDMKNEFN (189 aa)) folds into the Tyr recombinase domain. Catalysis depends on residues Arg198, Lys232, His302, Arg305, and His328. Tyr338 (O-(3'-phospho-DNA)-tyrosine intermediate) is an active-site residue.

This sequence belongs to the 'phage' integrase family.

One of three proteins encoded by transposon Tn554 required for its transposition. This Staphylococcus aureus (strain Mu50 / ATCC 700699) protein is Transposase A from transposon Tn554 (tnpA1).